The chain runs to 137 residues: Putative pre-16S rRNA nuclease (137 aa).

This sequence belongs to the YqgF nuclease family.

It localises to the cytoplasm. Its function is as follows. Could be a nuclease involved in processing of the 5'-end of pre-16S rRNA. In Bacillus cereus (strain 03BB102), this protein is Putative pre-16S rRNA nuclease.